Consider the following 216-residue polypeptide: MELPRKYDRVTGRILTHKNNQMCTTECSQMYNLHNPITFELGLGNVFVCMRCLTVHHCDMQTDCTIVNTHEGYVCAKTGLFYSGWMPAYADCFLEPICEPNIETVNVVVVLLSYVYSFLMENKERYAAIIDSIIKDGKFIKNVEDAVFYTFNAVFTNSTFNKIPLTTISRLFVQLIIGGHAKGTIYDSNVIRVSRRKREDSLLKKMRLEYGNALIL.

The protein belongs to the herpesviridae UL92 family.

The protein is Protein U63 (U63) of Homo sapiens (Human).